A 315-amino-acid polypeptide reads, in one-letter code: Olfactory receptor 3A3 (315 aa).

The Extracellular portion of the chain corresponds to 1–28 (MESEAGTNRTAVAEFMLLGLVQTEEMQS). Asn-8 carries N-linked (GlcNAc...) asparagine glycosylation. The chain crosses the membrane as a helical span at residues 29-52 (VIFVLLLFAYLVTTGGNLSILAAI). The Cytoplasmic portion of the chain corresponds to 53–60 (LVEPKLHT). The helical transmembrane segment at 61-82 (PMYFFLGNLSVLDVGCITVTVP) threads the bilayer. At 83–103 (AMLGRLLSHKSTISYDACLSQ) the chain is on the extracellular side. A disulfide bridge links Cys-100 with Cys-192. A helical membrane pass occupies residues 104-123 (LFFFHLLAGMDCFLLTAMAY). Topologically, residues 124–143 (DRFLAICRPLTYSTHMNQRV) are cytoplasmic. Residues 144–161 (QRMLVAVSWTCAFTNALT) form a helical membrane-spanning segment. Over 162–199 (HTIALTTLNFCGPSVINHFYCDLPQLFQLSCSSTQLNE) the chain is Extracellular. The helical transmembrane segment at 200 to 222 (LLLFVAAAVMAVAPLVFISVSYA) threads the bilayer. Over 223–239 (HVVAAVLQIHSAEGRKK) the chain is Cytoplasmic. Residues 240–262 (AFSTCGSHLTVVGIFYGTGVFSY) form a helical membrane-spanning segment. Over 263–275 (MRLGSVESSDKDK) the chain is Extracellular. The helical transmembrane segment at 276-295 (GVGVFMTVINPMLNPLIYSL) threads the bilayer. The Cytoplasmic segment spans residues 296–315 (RNTDVQGALCQLLVVKRSLT).

Belongs to the G-protein coupled receptor 1 family.

The protein resides in the cell membrane. Odorant receptor. The protein is Olfactory receptor 3A3 (OR3A3) of Pan troglodytes (Chimpanzee).